The following is a 352-amino-acid chain: Phosphoribosylformylglycinamidine cyclo-ligase (352 aa).

The protein belongs to the AIR synthase family.

It is found in the cytoplasm. It carries out the reaction 2-formamido-N(1)-(5-O-phospho-beta-D-ribosyl)acetamidine + ATP = 5-amino-1-(5-phospho-beta-D-ribosyl)imidazole + ADP + phosphate + H(+). The protein operates within purine metabolism; IMP biosynthesis via de novo pathway; 5-amino-1-(5-phospho-D-ribosyl)imidazole from N(2)-formyl-N(1)-(5-phospho-D-ribosyl)glycinamide: step 2/2. The chain is Phosphoribosylformylglycinamidine cyclo-ligase from Pseudomonas syringae pv. tomato (strain ATCC BAA-871 / DC3000).